Here is a 181-residue protein sequence, read N- to C-terminus: Large ribosomal subunit protein uL5 (181 aa).

The protein belongs to the universal ribosomal protein uL5 family. In terms of assembly, part of the 50S ribosomal subunit; part of the 5S rRNA/L5/L18/L25 subcomplex. Contacts the 5S rRNA and the P site tRNA. Forms a bridge to the 30S subunit in the 70S ribosome.

Its function is as follows. This is one of the proteins that bind and probably mediate the attachment of the 5S RNA into the large ribosomal subunit, where it forms part of the central protuberance. In the 70S ribosome it contacts protein S13 of the 30S subunit (bridge B1b), connecting the 2 subunits; this bridge is implicated in subunit movement. Contacts the P site tRNA; the 5S rRNA and some of its associated proteins might help stabilize positioning of ribosome-bound tRNAs. The chain is Large ribosomal subunit protein uL5 from Acaryochloris marina (strain MBIC 11017).